Reading from the N-terminus, the 163-residue chain is Protein NAG1 (163 aa).

Residues Ala-76–Met-96 traverse the membrane as a helical segment.

Its subcellular location is the membrane. Functionally, involved in yeast cell wall biogenesis. The sequence is that of Protein NAG1 (NAG1) from Saccharomyces cerevisiae (strain ATCC 204508 / S288c) (Baker's yeast).